The primary structure comprises 51 residues: Insulin (51 aa).

3 disulfide bridges follow: C7-C37, C19-C50, and C36-C41.

Belongs to the insulin family. Heterodimer of a B chain and an A chain linked by two disulfide bonds.

The protein localises to the secreted. Insulin decreases blood glucose concentration. It increases cell permeability to monosaccharides, amino acids and fatty acids. It accelerates glycolysis, the pentose phosphate cycle, and glycogen synthesis in liver. The protein is Insulin (INS) of Alligator mississippiensis (American alligator).